We begin with the raw amino-acid sequence, 166 residues long: RNA polymerase sigma factor SigV (166 aa).

Positions 38–51 (DIVQESIKKALSSV) match the Polymerase core binding motif. The H-T-H motif DNA-binding region spans 131–150 (LEEIAEITGENTNTVKTRLY).

Belongs to the sigma-70 factor family. ECF subfamily. Interacts with RsiV.

Its function is as follows. Sigma factors are initiation factors that promote the attachment of RNA polymerase to specific initiation sites and are then released. Positively regulates the expression of proteins involved in stress responses against bacitracin, paraquat and tellurite. The chain is RNA polymerase sigma factor SigV (sigV) from Bacillus subtilis (strain 168).